The primary structure comprises 245 residues: NAD-dependent protein deacetylase (245 aa).

Residues 1-245 form the Deacetylase sirtuin-type domain; that stretch reads MIFVQQFEEV…EFVEGLSSRK (245 aa). NAD(+) contacts are provided by Ala26, Thr30, Phe37, Arg38, Gln105, Ile107, Asp108, and His123. Phe37 is a nicotinamide binding site. Residues Ile107 and Asp108 each coordinate nicotinamide. His123 serves as the catalytic Proton acceptor. Zn(2+)-binding residues include Cys131, Cys134, Cys151, and Cys154. NAD(+) is bound by residues Thr190, Ser191, Asn216, and Ile234.

The protein belongs to the sirtuin family. Class U subfamily. It depends on Zn(2+) as a cofactor.

Its subcellular location is the cytoplasm. It carries out the reaction N(6)-acetyl-L-lysyl-[protein] + NAD(+) + H2O = 2''-O-acetyl-ADP-D-ribose + nicotinamide + L-lysyl-[protein]. In terms of biological role, NAD-dependent protein deacetylase which modulates the activities of several enzymes which are inactive in their acetylated form. The chain is NAD-dependent protein deacetylase from Bacillus cereus (strain ZK / E33L).